Consider the following 211-residue polypeptide: Large ribosomal subunit protein eL13 (211 aa).

The protein belongs to the eukaryotic ribosomal protein eL13 family. As to quaternary structure, component of the 60S large ribosomal subunit (LSU).

The protein resides in the cytoplasm. Component of the ribosome, a large ribonucleoprotein complex responsible for the synthesis of proteins in the cell. The small ribosomal subunit (SSU) binds messenger RNAs (mRNAs) and translates the encoded message by selecting cognate aminoacyl-transfer RNA (tRNA) molecules. The large subunit (LSU) contains the ribosomal catalytic site termed the peptidyl transferase center (PTC), which catalyzes the formation of peptide bonds, thereby polymerizing the amino acids delivered by tRNAs into a polypeptide chain. The nascent polypeptides leave the ribosome through a tunnel in the LSU and interact with protein factors that function in enzymatic processing, targeting, and the membrane insertion of nascent chains at the exit of the ribosomal tunnel. As part of the LSU, it is probably required for its formation and the maturation of rRNAs. The chain is Large ribosomal subunit protein eL13 (RPL13) from Gallus gallus (Chicken).